The chain runs to 1009 residues: UvrABC system protein A (1009 aa).

32–39 (GLSGSGKS) serves as a coordination point for ATP. 2 consecutive ABC transporter domains span residues 314 to 592 (WSHG…AESQ) and 612 to 941 (RDPS…KFLR). 645–652 (GVSGSGKS) is an ATP binding site. The C4-type zinc-finger motif lies at 744–770 (CENCSGDGTIKIEMNFLPDVYVPCEVC). The interval 956 to 1009 (KAPRKTAARKTAAAKSTTKKTATVRTTNNTATKKAAAVTKKTAPAKKTTRARKA) is disordered. The span at 964-997 (RKTAAAKSTTKKTATVRTTNNTATKKAAAVTKKT) shows a compositional bias: low complexity. Basic residues predominate over residues 998–1009 (APAKKTTRARKA).

The protein belongs to the ABC transporter superfamily. UvrA family. Forms a heterotetramer with UvrB during the search for lesions.

It localises to the cytoplasm. The UvrABC repair system catalyzes the recognition and processing of DNA lesions. UvrA is an ATPase and a DNA-binding protein. A damage recognition complex composed of 2 UvrA and 2 UvrB subunits scans DNA for abnormalities. When the presence of a lesion has been verified by UvrB, the UvrA molecules dissociate. This chain is UvrABC system protein A, found in Streptomyces avermitilis (strain ATCC 31267 / DSM 46492 / JCM 5070 / NBRC 14893 / NCIMB 12804 / NRRL 8165 / MA-4680).